The primary structure comprises 290 residues: ATP synthase gamma chain (290 aa).

The protein belongs to the ATPase gamma chain family. F-type ATPases have 2 components, CF(1) - the catalytic core - and CF(0) - the membrane proton channel. CF(1) has five subunits: alpha(3), beta(3), gamma(1), delta(1), epsilon(1). CF(0) has three main subunits: a, b and c.

The protein resides in the cell membrane. In terms of biological role, produces ATP from ADP in the presence of a proton gradient across the membrane. The gamma chain is believed to be important in regulating ATPase activity and the flow of protons through the CF(0) complex. This is ATP synthase gamma chain from Wolbachia sp. subsp. Brugia malayi (strain TRS).